Here is a 576-residue protein sequence, read N- to C-terminus: Arginine--tRNA ligase (576 aa).

Residues 132–142 (ANPTGPMHIGH) carry the 'HIGH' region motif.

Belongs to the class-I aminoacyl-tRNA synthetase family. As to quaternary structure, monomer.

It is found in the cytoplasm. It carries out the reaction tRNA(Arg) + L-arginine + ATP = L-arginyl-tRNA(Arg) + AMP + diphosphate. This Ehrlichia ruminantium (strain Welgevonden) protein is Arginine--tRNA ligase.